Here is a 191-residue protein sequence, read N- to C-terminus: HTH-type transcriptional regulator YjdC (191 aa).

Residues 1 to 60 enclose the HTH tetR-type domain; it reads MQREDVLGEALKLLELQGIANTTLEMVAERVDYPLDELRRFWPDKEAILYDALRYLSQQI.

The chain is HTH-type transcriptional regulator YjdC (yjdC) from Escherichia coli (strain K12).